The primary structure comprises 111 residues: Large ribosomal subunit protein P2 (111 aa).

The interval 81 to 111 (AAGGAAAPAAEEKKEEEKEESDEDMGFGLFD) is disordered. Residue serine 101 is modified to Phosphoserine.

It belongs to the eukaryotic ribosomal protein P1/P2 family. As to quaternary structure, P1 and P2 exist as dimers at the large ribosomal subunit.

Its function is as follows. Plays an important role in the elongation step of protein synthesis. This chain is Large ribosomal subunit protein P2, found in Aspergillus fumigatus (strain ATCC MYA-4609 / CBS 101355 / FGSC A1100 / Af293) (Neosartorya fumigata).